The following is a 105-amino-acid chain: Large ribosomal subunit protein bL21 (105 aa).

Belongs to the bacterial ribosomal protein bL21 family. In terms of assembly, part of the 50S ribosomal subunit. Contacts protein L20.

Functionally, this protein binds to 23S rRNA in the presence of protein L20. This Rickettsia prowazekii (strain Madrid E) protein is Large ribosomal subunit protein bL21.